Reading from the N-terminus, the 209-residue chain is Uracil phosphoribosyltransferase (209 aa).

5-phospho-alpha-D-ribose 1-diphosphate contacts are provided by residues arginine 79, arginine 104, and 131–139; that span reads DPMLATGGS. Residues isoleucine 194 and 199–201 contribute to the uracil site; that span reads GDA. Position 200 (aspartate 200) interacts with 5-phospho-alpha-D-ribose 1-diphosphate.

This sequence belongs to the UPRTase family. Mg(2+) serves as cofactor.

The catalysed reaction is UMP + diphosphate = 5-phospho-alpha-D-ribose 1-diphosphate + uracil. The protein operates within pyrimidine metabolism; UMP biosynthesis via salvage pathway; UMP from uracil: step 1/1. Allosterically activated by GTP. Catalyzes the conversion of uracil and 5-phospho-alpha-D-ribose 1-diphosphate (PRPP) to UMP and diphosphate. This Latilactobacillus sakei (Lactobacillus sakei) protein is Uracil phosphoribosyltransferase.